Consider the following 335-residue polypeptide: Anthranilate phosphoribosyltransferase (335 aa).

5-phospho-alpha-D-ribose 1-diphosphate is bound by residues Gly79, 82–83 (GD), Ser87, 89–92 (NIST), 107–115 (KHGNRSITS), and Ser119. Gly79 serves as a coordination point for anthranilate. A Mg(2+)-binding site is contributed by Ser91. Position 110 (Asn110) interacts with anthranilate. Position 165 (Arg165) interacts with anthranilate. The Mg(2+) site is built by Asp224 and Glu225.

Belongs to the anthranilate phosphoribosyltransferase family. Homodimer. Mg(2+) serves as cofactor.

It catalyses the reaction N-(5-phospho-beta-D-ribosyl)anthranilate + diphosphate = 5-phospho-alpha-D-ribose 1-diphosphate + anthranilate. It functions in the pathway amino-acid biosynthesis; L-tryptophan biosynthesis; L-tryptophan from chorismate: step 2/5. Functionally, catalyzes the transfer of the phosphoribosyl group of 5-phosphorylribose-1-pyrophosphate (PRPP) to anthranilate to yield N-(5'-phosphoribosyl)-anthranilate (PRA). The polypeptide is Anthranilate phosphoribosyltransferase (Lactococcus lactis subsp. cremoris (strain SK11)).